Consider the following 725-residue polypeptide: MREEDIRSTAGHGTSNKDWWPNQLNLRILHQHSEKANPMGPDFNYREEFKKLDYWALKEDLRKLMTESQDWWPADFGHYGPLIIRMAWHSAGTYRIQDGRGGAESGAQRFAPLNSWPDNINLDKARRLLWPIKQKYGRRISWADLMILAGNVALESMGLKTIGFAGGRADVWEPEEDIYWGSEQQWLGRDRFGEEGKLEDPLAASEMGLIYVNPEGPGREPDPLKAAQQIRETFKRMGMNDEETVALIAGGHTFGKTHGAASPSHLGPEPEAAPIEEMGLGWKNSYGTGKGGDTITSGLEVTWTSSPTKWTSNFLWNLFGYEWELTKSPAGAWQWRPKNGAGEGTVPDAHDPNKRHAPGMLTTDIALRVDPVYEKIARRFLENPDEFAKAFARAWFKLTHRDLGPRSRYLGPEVPEEEFIWQDPLPKRDYDLIDEGDIAELKKRIQASGMSIREMVMTAWASASTFRGSDKRGGANGARIRLAPQIGWEVNEPEQLRPVLETLEGIQQEFNRSQTGRKRVSLADLIVLAGCVGIEQAARNAGFEITVPFTPGRVDATQEQTDVESFSYLEPVHDGFRNYLKRKFSVPAEHLLIDRANLLTLTAPEMTVLIGGLRVLDCNWGRTKHGVLTDRPGALTNDFFVNLLDMRWKWNATDDENVFEGRDRATGELKWTATRVDLIFGSNAQLRAIAEVYASNDGQEKFVQDFVKAWTKVMNLDRFDLLVKK.

The segment at residues 88 to 211 (WHSAGTYRIQ…LAASEMGLIY (124 aa)) is a cross-link (tryptophyl-tyrosyl-methioninium (Trp-Tyr) (with M-237)). The active-site Proton acceptor is histidine 89. The tryptophyl-tyrosyl-methioninium (Tyr-Met) (with W-88) cross-link spans 211-237 (YVNPEGPGREPDPLKAAQQIRETFKRM). Histidine 252 lines the heme b pocket.

It belongs to the peroxidase family. Peroxidase/catalase subfamily. In terms of assembly, homodimer or homotetramer. Heme b is required as a cofactor. Post-translationally, formation of the three residue Trp-Tyr-Met cross-link is important for the catalase, but not the peroxidase activity of the enzyme.

It catalyses the reaction H2O2 + AH2 = A + 2 H2O. It carries out the reaction 2 H2O2 = O2 + 2 H2O. Its function is as follows. Bifunctional enzyme with both catalase and broad-spectrum peroxidase activity. This Symbiobacterium thermophilum (strain DSM 24528 / JCM 14929 / IAM 14863 / T) protein is Catalase-peroxidase.